The sequence spans 339 residues: MSTVHEILCKLSLEGDHSTPPSAYGSVKPYTNFDAERDALNIETAVKTKGVDEVTIVNILTNRSNVQRQDIAFAYQRRTKKELPSALKSALSGHLETVILGLLKTPAQYDASELKASMKGLGTDEDSLIEIICSRTNQELQEINRVYKEMYKTDLEKDIISDTSGDFRKLMVALAKGRRAEDGSVIDYELIDQDARELYDAGVKRKGTDVPKWISIMTERSVCHLQKVFERYKSYSPYDMLESIKKEVKGDLENAFLNLVQCIQNKPLYFADRLYDSMKGKGTRDKVLIRIMVSRSEVDMLKIRSEFKRKYGKSLYYYIQQDTKGDYQKALLYLCGGDD.

Position 2 is an N-acetylserine (serine 2). The interval 2-24 is S100A10-binding site; that stretch reads STVHEILCKLSLEGDHSTPPSAY. A Phosphotyrosine; by SRC modification is found at tyrosine 24. At serine 26 the chain carries Phosphoserine; by PKC. Annexin repeat units lie at residues 33-104 and 105-176; these read FDAE…GLLK and TPAQ…ALAK. Position 49 is an N6-acetyllysine; alternate (lysine 49). Lysine 49 is covalently cross-linked (Glycyl lysine isopeptide (Lys-Gly) (interchain with G-Cter in SUMO1); alternate). Lysine 49 is covalently cross-linked (Glycyl lysine isopeptide (Lys-Gly) (interchain with G-Cter in SUMO2); alternate). N6-acetyllysine is present on lysine 152. The residue at position 184 (serine 184) is a Phosphoserine. Annexin repeat units follow at residues 189 to 261 and 265 to 336; these read ELID…NLVQ and NKPL…YLCG. Residue tyrosine 199 is modified to Phosphotyrosine. N6-acetyllysine is present on lysine 227.

Belongs to the annexin family. As to quaternary structure, heterotetramer containing 2 light chains of S100A10/p11 and 2 heavy chains of ANXA2/p36. Interacts with ATP1B1. Interacts with DYSF. Interacts with COCH. Interacts (via repeat Annexin 1) with PCSK9 (via the C-terminal domain); the interaction inhibits the degradation of LDLR. Interacts with CEACAM1 (via the cytoplasmic domain); this interaction is regulated by phosphorylation of CEACAM1. Interacts with APPL2 and APPL1; targets APPL2 to endosomes and acting in parallel to RAB5A. Interacts with S100A4. May interact with UBAP2. Interacts with PLEKHG4B; this interaction is required for PLEKHG4B localization to cell-cell adhesions. Interacts with FAM13A. Interacts with salivary cystatin-L2 (via loop 2) from the tick Ixodes scapularis; the interaction results in reduced activation of mouse NLRC4 inflammasome formation upon Anaplasma phagocytophilum infection. In terms of processing, ISGylated.

Its subcellular location is the secreted. The protein localises to the extracellular space. It is found in the extracellular matrix. The protein resides in the basement membrane. It localises to the melanosome. Its subcellular location is the early endosome. Functionally, calcium-regulated membrane-binding protein whose affinity for calcium is greatly enhanced by anionic phospholipids. It binds two calcium ions with high affinity. May be involved in heat-stress response. Inhibits PCSK9-enhanced LDLR degradation, probably reduces PCSK9 protein levels via a translational mechanism but also competes with LDLR for binding with PCSK9. Binds to endosomes damaged by phagocytosis of particulate wear debris and participates in endosomal membrane stabilization, thereby limiting NLRP3 inflammasome activation. Required for endothelial cell surface plasmin generation and may support fibrinolytic surveillance and neoangiogenesis. Its function is as follows. (Microbial infection) Regulates the formation of the NLRC4 inflammasome triggered by Anaplasma phagocytophilum infection. (Microbial infection) Protects against Klebsiella pneumoniae infection. Attenuates bacteria-induced pulmonary inflammation and promotes intro-abdominal pathogen clearance. Promotes anti-inflammatory responses by facilitating TLR4 internalization and translocation into early endosomal membranes; this leads to activation of TRAM-dependent endosomal signaling and release of anti-inflammatory cytokines. In terms of biological role, (Microbial infection) Promotes macrophage phagocytic efficiency towards Cryptococcus neoformans and ability to control fungal infection inside the cells. Functionally, (Microbial infection) Contributes to protection against Pseudomonas aeruginosa infection by regulating autophagy via the AKT1-mTOR-ULK1/2 signaling pathway and activation of Rho GTPases via FAM13A-mediated mechanism. The chain is Annexin A2 (Anxa2) from Mus musculus (Mouse).